The primary structure comprises 210 residues: DNA-directed RNA polymerase III subunit rpc31 (210 aa).

S103 carries the post-translational modification Phosphoserine. The interval 151 to 210 (KDESSEAAHPNIEEEPDEGLEEEDEDFGDDDDNDYGENYFDNGEGDDYDDYDGDEGAIYE) is disordered. Composition is skewed to acidic residues over residues 163-185 (EEEPDEGLEEEDEDFGDDDDNDY) and 193-210 (GEGDDYDDYDGDEGAIYE).

The protein belongs to the eukaryotic RPC7 RNA polymerase subunit family. As to quaternary structure, component of the RNA polymerase III (Pol III) complex.

It localises to the cytoplasm. The protein resides in the nucleus. Its function is as follows. DNA-dependent RNA polymerase catalyzes the transcription of DNA into RNA using the four ribonucleoside triphosphates as substrates. Specific peripheric component of RNA polymerase III which synthesizes small RNAs, such as 5S rRNA and tRNAs. The polypeptide is DNA-directed RNA polymerase III subunit rpc31 (rpc31) (Schizosaccharomyces pombe (strain 972 / ATCC 24843) (Fission yeast)).